Consider the following 299-residue polypeptide: Protease HtpX homolog (299 aa).

Transmembrane regions (helical) follow at residues 7–24 (GILM…GALI) and 29–46 (GAII…FTFW). Residue His-130 coordinates Zn(2+). Glu-131 is a catalytic residue. His-134 is a binding site for Zn(2+). 2 helical membrane-spanning segments follow: residues 145 to 165 (VTAT…FFGG) and 174 to 194 (PVGI…AGLV). Position 203 (Glu-203) interacts with Zn(2+).

The protein belongs to the peptidase M48B family. The cofactor is Zn(2+).

It localises to the cell inner membrane. This Cereibacter sphaeroides (strain ATCC 17025 / ATH 2.4.3) (Rhodobacter sphaeroides) protein is Protease HtpX homolog.